Here is a 612-residue protein sequence, read N- to C-terminus: Protein tipD (612 aa).

The disordered stretch occupies residues 95-128; that stretch reads RNEKKTQQQPPSGSSKMDSSSSSSSSNRVSGMGS. Over residues 106 to 128 the composition is skewed to low complexity; the sequence is SGSSKMDSSSSSSSSNRVSGMGS. 7 WD repeats span residues 322–361, 364–403, 406–444, 447–486, 490–530, 535–576, and 582–611; these read GHNSEIYCMAFNSIGNLLATGGGDKCVKVWDVISGQQKST, GASQSIVSVSFSPNDESILGTSNDNSARLWNTELGRSRHT, GHIGKVYTGKFINSNRVVTGSHDRTIKLWDLQKGYCTRT, CFSSCNDLVILGGSGTHLASGHVDHSVRFWDSNAGEPTQV, IHEG…TIRT, EYRN…TVKV, and NNGSSVCCCSWSPLANIFISADKDKNIIQW.

It belongs to the WD repeat tipD family.

Functionally, not known; disruption of the gene for tipD results in morphological defects. The polypeptide is Protein tipD (tipD) (Dictyostelium discoideum (Social amoeba)).